We begin with the raw amino-acid sequence, 573 residues long: Pentatricopeptide repeat-containing protein At3g62890 (573 aa).

PPR repeat units follow at residues Glu23–Pro60, Asp61–Lys95, Asp96–Lys126, Asp127–Ser161, Trp162–Pro188, Asn198–Ile232, Asp233–Lys263, Asp265–Ser295, Asn301–Pro336, and Ser337–Glu367. A type E motif; degenerate region spans residues Ile372–Glu447. Residues Gly448–Arg478 form a type E(+) motif region. Positions Glu479–Trp573 are type DYW motif.

The protein belongs to the PPR family. PCMP-H subfamily.

The polypeptide is Pentatricopeptide repeat-containing protein At3g62890 (PCMP-H82) (Arabidopsis thaliana (Mouse-ear cress)).